Here is a 76-residue protein sequence, read N- to C-terminus: Acyl carrier protein (76 aa).

A Carrier domain is found at 1-76 (MATFDDVKDV…AAIDYIESKQ (76 aa)). Serine 36 bears the O-(pantetheine 4'-phosphoryl)serine mark.

This sequence belongs to the acyl carrier protein (ACP) family. Post-translationally, 4'-phosphopantetheine is transferred from CoA to a specific serine of apo-ACP by AcpS. This modification is essential for activity because fatty acids are bound in thioester linkage to the sulfhydryl of the prosthetic group.

Its subcellular location is the cytoplasm. Its pathway is lipid metabolism; fatty acid biosynthesis. Functionally, carrier of the growing fatty acid chain in fatty acid biosynthesis. In Deinococcus deserti (strain DSM 17065 / CIP 109153 / LMG 22923 / VCD115), this protein is Acyl carrier protein.